A 252-amino-acid chain; its full sequence is Acyl-coenzyme A diphosphatase FITM2 (252 aa).

Topologically, residues 1–25 (MAAAVAGSLVDKLVCLWRQPYTRIY) are cytoplasmic. Residues 26-46 (LPHLFFCISLVGSVLKNAELV) traverse the membrane as a helical segment. Topologically, residues 47–59 (PESYFSSSRNVLN) are lumenal. A helical transmembrane segment spans residues 60-80 (LYFVKVSWGWTIVLLLPFIAY). Residues 81–94 (SNFYIKSHMFALRR) are Cytoplasmic-facing. Residues 95–115 (LTSLLVATLVWYICTETFFYI) traverse the membrane as a helical segment. The Lumenal portion of the chain corresponds to 116 to 156 (EDITGSCYESNTMVVIRGEFDTKAACRKAGFFWDGFDISGH). His156 is an active-site residue. A helical membrane pass occupies residues 157–177 (SFILSYSSLVIMEEMVPMLHI). At 178 to 190 (QPAYRNPPLDCLY) the chain is on the cytoplasmic side. A helical membrane pass occupies residues 191 to 211 (LALNVIVAIWIWMFGCTSVYF). His212 is an active-site residue. The Lumenal segment spans residues 212-223 (HDIIDKILGTSC). The helical transmembrane segment at 224–244 (GILGWYMTYKVWYVKLFSPGL) threads the bilayer. Residues 245–252 (PPQPKQHT) lie on the Cytoplasmic side of the membrane.

Belongs to the FIT family. FIT2 subfamily. In terms of tissue distribution, widely expressed.

Its subcellular location is the endoplasmic reticulum membrane. The enzyme catalyses an acyl-CoA + H2O = an acyl-4'-phosphopantetheine + adenosine 3',5'-bisphosphate + 2 H(+). Its function is as follows. Fatty acyl-coenzyme A (CoA) diphosphatase that hydrolyzes fatty acyl-CoA to yield acyl-4'-phosphopantetheine and adenosine 3',5'-bisphosphate. Preferentially hydrolyzes unsaturated long-chain acyl-CoA substrates in the endoplasmic reticulum (ER) lumen. This catalytic activity is required for maintaining ER structure and for lipid droplets (LDs) biogenesis, which are lipid storage organelles involved in maintaining lipid and energy homeostasis. Required for lipid droplet accumulation in liver and intestine during embryogenesis. May directly bind to diacylglycerol (DAGs) and triacylglycerol, which is also important for LD biogenesis. May support directional budding of nacent LDs from the ER into the cytosol by reducing DAG levels at sites of LD formation. May play a role in the regulation of cell morphology, ER morphology and cytoskeletal organization. The polypeptide is Acyl-coenzyme A diphosphatase FITM2 (Danio rerio (Zebrafish)).